We begin with the raw amino-acid sequence, 145 residues long: MASKSSITPLLLAAVLASVFAAATATGQYCYAGMGLPSNPLEGCREYVAQQTCGVTIAGSPVSSEPGDTPKDRCCQELDEAPQHCRCEAVRYFIGRRSHPDWSVLKDLPGCPKEPQRDFAKVLVTPGQCNVLTVHNAPYCLGLDI.

Residues 1-25 (MASKSSITPLLLAAVLASVFAAATA) form the signal peptide.

It belongs to the protease inhibitor I6 (cereal trypsin/alpha-amylase inhibitor) family. As to quaternary structure, heterotetramer of one CMa, one CMb and two CMd chains. Five disulfide bonds, which are essential for the inhibitor activity, are probably present. As to expression, endosperm.

It localises to the secreted. In terms of biological role, alpha-amylase/trypsin inhibitor. It could be involved in insect defense mechanisms. The polypeptide is Alpha-amylase/trypsin inhibitor CMa (IAT1) (Hordeum vulgare (Barley)).